Consider the following 67-residue polypeptide: Large ribosomal subunit protein bL35 (67 aa).

It belongs to the bacterial ribosomal protein bL35 family.

The protein is Large ribosomal subunit protein bL35 of Bartonella quintana (strain Toulouse) (Rochalimaea quintana).